The sequence spans 681 residues: DNA ligase (681 aa).

Residues 35–39, 84–85, and Glu-115 contribute to the NAD(+) site; these read DAEYD and SL. Residue Lys-117 is the N6-AMP-lysine intermediate of the active site. Residues Arg-138, Glu-175, Lys-293, and Lys-317 each coordinate NAD(+). Cys-411, Cys-414, Cys-429, and Cys-435 together coordinate Zn(2+). One can recognise a BRCT domain in the interval 598-681; that stretch reads RTNLAVPGKT…SLLRDTSSSE (84 aa).

It belongs to the NAD-dependent DNA ligase family. LigA subfamily. The cofactor is Mg(2+). Requires Mn(2+) as cofactor.

It catalyses the reaction NAD(+) + (deoxyribonucleotide)n-3'-hydroxyl + 5'-phospho-(deoxyribonucleotide)m = (deoxyribonucleotide)n+m + AMP + beta-nicotinamide D-nucleotide.. In terms of biological role, DNA ligase that catalyzes the formation of phosphodiester linkages between 5'-phosphoryl and 3'-hydroxyl groups in double-stranded DNA using NAD as a coenzyme and as the energy source for the reaction. It is essential for DNA replication and repair of damaged DNA. This Nitrosomonas europaea (strain ATCC 19718 / CIP 103999 / KCTC 2705 / NBRC 14298) protein is DNA ligase.